The chain runs to 250 residues: Imidazole glycerol phosphate synthase subunit HisF (250 aa).

Catalysis depends on residues aspartate 11 and aspartate 130.

Belongs to the HisA/HisF family. As to quaternary structure, heterodimer of HisH and HisF.

It localises to the cytoplasm. It catalyses the reaction 5-[(5-phospho-1-deoxy-D-ribulos-1-ylimino)methylamino]-1-(5-phospho-beta-D-ribosyl)imidazole-4-carboxamide + L-glutamine = D-erythro-1-(imidazol-4-yl)glycerol 3-phosphate + 5-amino-1-(5-phospho-beta-D-ribosyl)imidazole-4-carboxamide + L-glutamate + H(+). Its pathway is amino-acid biosynthesis; L-histidine biosynthesis; L-histidine from 5-phospho-alpha-D-ribose 1-diphosphate: step 5/9. IGPS catalyzes the conversion of PRFAR and glutamine to IGP, AICAR and glutamate. The HisF subunit catalyzes the cyclization activity that produces IGP and AICAR from PRFAR using the ammonia provided by the HisH subunit. The sequence is that of Imidazole glycerol phosphate synthase subunit HisF from Bacteroides fragilis (strain ATCC 25285 / DSM 2151 / CCUG 4856 / JCM 11019 / LMG 10263 / NCTC 9343 / Onslow / VPI 2553 / EN-2).